We begin with the raw amino-acid sequence, 273 residues long: Large ribosomal subunit protein uL2 (273 aa).

The interval 222–273 (GMAMNPVDHPHGGGEGRNKGIQPVSPWGTPAKGYRTRSNKRTDKYIVRRRNK) is disordered. Basic and acidic residues predominate over residues 229–239 (DHPHGGGEGRN).

This sequence belongs to the universal ribosomal protein uL2 family. In terms of assembly, part of the 50S ribosomal subunit. Forms a bridge to the 30S subunit in the 70S ribosome.

One of the primary rRNA binding proteins. Required for association of the 30S and 50S subunits to form the 70S ribosome, for tRNA binding and peptide bond formation. It has been suggested to have peptidyltransferase activity; this is somewhat controversial. Makes several contacts with the 16S rRNA in the 70S ribosome. This Tolumonas auensis (strain DSM 9187 / NBRC 110442 / TA 4) protein is Large ribosomal subunit protein uL2.